The following is a 361-amino-acid chain: U7 snRNA-associated Sm-like protein LSm11 (361 aa).

The disordered stretch occupies residues 1–26 (MEEREWGARSARAGSPASPPSPRLDV). A phosphoserine mark is found at serine 15 and serine 21. Arginine 41 carries the post-translational modification Omega-N-methylarginine. The segment at 67-142 (RTGRGRARGT…QGPGRSKKAP (76 aa)) is disordered. Over residues 76-96 (TGEPASAGTSTGTSTGAGSSS) the composition is skewed to low complexity. Residue lysine 121 forms a Glycyl lysine isopeptide (Lys-Gly) (interchain with G-Cter in SUMO2) linkage. Position 155 is a phosphoserine (serine 155). The Sm domain maps to 155–230 (SPLGELHRCI…LTLTRLFDRL (76 aa)). Positions 172–205 (VHIRTFKGLRGVCTGFLVAFDKFWNMALTDVDET) are SM 1. Residues 268-335 (RGDTDRSSHR…RKKKRKPKVD (68 aa)) form a disordered region. Serine 281 carries the post-translational modification Phosphoserine. Over residues 307–323 (GSSVGGTFSRATTLSRG) the composition is skewed to polar residues. The segment at 344 to 357 (INQIFIRGENVLLV) is SM 2.

It belongs to the snRNP Sm proteins family. As to quaternary structure, component of the heptameric ring U7 snRNP complex, or U7 Sm protein core complex, at least composed of LSM10, LSM11, SNRPB, SNRPD3, SNRPE, SNRPF, SNRPG and U7 snRNA. Formation of the U7 snRNP is an ATP-dependent process mediated by a specialized SMN complex containing at least the Sm protein core complex and additionally, the U7-specific LSM10 and LSM11 proteins. Identified in a histone pre-mRNA complex, at least composed of ERI1, LSM11, SLBP, SNRPB, SYNCRIP and YBX1. Interacts (via the Sm domains) with CLNS1A. Interacts with PRMT5, SMN, ZNF473 and WDR77. Not methylated.

The protein localises to the nucleus. Component of the U7 snRNP complex that is involved in the histone 3'-end pre-mRNA processing. Increases U7 snRNA levels but not histone 3'-end pre-mRNA processing activity, when overexpressed. Required for cell cycle progression from G1 to S phases. Binds specifically to the Sm-binding site of U7 snRNA. In Mus musculus (Mouse), this protein is U7 snRNA-associated Sm-like protein LSm11.